The following is an 853-amino-acid chain: E3 ubiquitin-protein ligase RNF216 (853 aa).

Disordered regions lie at residues 33-102, 125-152, and 165-228; these read TISD…DDIV, PLEV…ASVD, and PYFQ…AHPL. A compositionally biased stretch (acidic residues) spans 53 to 73; sequence QQEDDLDDDVILTEDDSEDEY. Lys89 is covalently cross-linked (Glycyl lysine isopeptide (Lys-Gly) (interchain with G-Cter in SUMO2)). Residues Lys339 and Lys342 each participate in a glycyl lysine isopeptide (Lys-Gly) (interchain with G-Cter in SUMO2) cross-link. Ser407 bears the Phosphoserine mark. Residues Lys413, Lys418, Lys436, Lys447, and Lys473 each participate in a glycyl lysine isopeptide (Lys-Gly) (interchain with G-Cter in SUMO2) cross-link. The stretch at 463–479 forms a coiled coil; it reads VKQEQEFYEQKIKEMAE. A TRIAD supradomain region spans residues 499 to 716; the sequence is QLIECRCCYG…SPGAPCQECS (218 aa). Residues Cys503, Cys506, Cys525, Cys528, Cys593, and Cys596 each contribute to the Zn(2+) site. Residues 503 to 552 form an RING-type 1 zinc finger; that stretch reads CRCCYGEFPFEELTQCADAHLFCKECLIRYAQEAVFGSGKSELSCMEGSC. Residues 571–636 form an IBR-type zinc finger; that stretch reads YKYYERKAEE…LWKEHNGLTC (66 aa). A Glycyl lysine isopeptide (Lys-Gly) (interchain with G-Cter in SUMO2) cross-link involves residue Lys607. Residues Cys611, Cys616, Cys621, Cys624, His631, and Cys636 each coordinate Zn(2+). Residues Lys646 and Lys654 each participate in a glycyl lysine isopeptide (Lys-Gly) (interchain with G-Cter in SUMO2) cross-link. 2 residues coordinate Zn(2+): Cys663 and Cys666. An RING-type 2; atypical zinc finger spans residues 663–691; it reads CHKCGTGLIKSEGCNRMSCRCGAQMCYLC. Cys676 is an active-site residue. Zn(2+) is bound by residues Cys681, Cys683, Cys688, Cys691, His704, and Cys712. A coiled-coil region spans residues 725–751; the sequence is TEDDEKLIEEIQKEAEEEQKRKNGENT. Glycyl lysine isopeptide (Lys-Gly) (interchain with G-Cter in SUMO2) cross-links involve residues Lys753 and Lys761.

Interacts with UBE2L3 and to some extent with UBE2L6. Interacts with TRAF3, TLR3, TLR4, TLR5 and TLR9. Isoform 3/ZIN binds RIPK1. Post-translationally, auto-ubiquitinated. In terms of processing, phosphorylation at Ser-719 enhances acceptor ubiquitin binding and chain-type specificity towards 'Lys-63' di-ubiquitin but not di-ubiquitin with other linkage types.

The protein resides in the cytoplasm. Its subcellular location is the cytoplasmic vesicle. The protein localises to the clathrin-coated vesicle. The enzyme catalyses S-ubiquitinyl-[E2 ubiquitin-conjugating enzyme]-L-cysteine + [acceptor protein]-L-lysine = [E2 ubiquitin-conjugating enzyme]-L-cysteine + N(6)-ubiquitinyl-[acceptor protein]-L-lysine.. It functions in the pathway protein modification; protein ubiquitination. Allosterically activated by 'Lys-63'-linked di-ubiquitin. Its function is as follows. E3 ubiquitin ligase which accepts ubiquitin from specific E2 ubiquitin-conjugating enzymes, and then transfers it to substrates promoting their ubiquitination. Plays a role in the regulation of antiviral responses by promoting the degradation of TRAF3, TLR4 and TLR9. In turn, down-regulates NF-kappa-B and IRF3 activation as well as beta interferon production. Also participates in the regulation of autophagy by ubiquitinating BECN1 leading to its degradation and autophagy inhibition. Plays a role in ARC-dependent synaptic plasticity by mediating ARC ubiquitination resulting in its rapid proteasomal degradation. Plays aso an essential role in spermatogenesis and male fertility. Mechanistically, regulates meiosis by promoting the degradation of PRKACB through the ubiquitin-mediated lysosome pathway. Modulates the gonadotropin-releasing hormone signal pathway by affecting the stability of STAU2 that is required for the microtubule-dependent transport of neuronal RNA from the cell body to the dendrite. This is E3 ubiquitin-protein ligase RNF216 (Rnf216) from Mus musculus (Mouse).